The sequence spans 673 residues: UPF0313 protein blr7973 (673 aa).

Positions 332 to 611 (AWDMIKFSVT…KAFLRYHDPD (280 aa)) constitute a Radical SAM core domain. C346, C350, and C353 together coordinate [4Fe-4S] cluster. Residues 632-673 (RPDQLVPAHQPPGTGKAAGTRRPVRPGGKTQRFTTKGLRVMK) are disordered.

It belongs to the UPF0313 family. [4Fe-4S] cluster is required as a cofactor.

The polypeptide is UPF0313 protein blr7973 (Bradyrhizobium diazoefficiens (strain JCM 10833 / BCRC 13528 / IAM 13628 / NBRC 14792 / USDA 110)).